Consider the following 516-residue polypeptide: MVRKIFQTNAELKDWLSGQNSAIIFIPTMGGLHPGHQYLIQKAKEKKTNTNQIILVSIFVNPLQFSKGEDFKKYPRNIKRDAELAFSAGADAIWAPEYDEVFPGGADSHFKIEVPKTLHNQLCGAERKGHFDGVATVIIRLIKIIKPKKLILGEKDWQQLIIIRKLFQELSIPVKIESYSTQRDQSGFAYSSRNSYLSDSERVNAQSLPNAIKEAKTEFDKGKVINLTKIASIFKENNLKIEYLKIVDPFSLKETENINRLCLLAIAVKCGSTRLIDHTFLMHRKPIIAIDGPAGAGKSTVTKAFAKKLGFIYLDTGAMYRAVTWLIISNSIDPNDQAEIKNILKDSKLEFKNSSFVEQKIFINNIDVTEKIRSPQVTSMVSEIAKQQFVREVLTRKQQVIGNNGGLVAEGRDIGTAVFPDADLKIFLTASPTERAKRRALDLHKRGYEFSSIEDLEKEIKERDKKDSERKIAPLKKAQDAIELVTDGMNIEDVLKELIDIFRSKIPEEVWPTPNS.

Residues 1 to 279 are pantoate--beta-alanine ligase; that stretch reads MVRKIFQTNA…CGSTRLIDHT (279 aa). 29 to 36 serves as a coordination point for ATP; that stretch reads MGGLHPGH. Histidine 36 functions as the Proton donor in the catalytic mechanism. Glutamine 64 contributes to the (R)-pantoate binding site. Glutamine 64 serves as a coordination point for beta-alanine. Residue 153–156 coordinates ATP; the sequence is GEKD. Glutamine 159 provides a ligand contact to (R)-pantoate. 190–193 contributes to the ATP binding site; that stretch reads YSSR. Residues 280–516 are cytidylate kinase; sequence FLMHRKPIIA…PEEVWPTPNS (237 aa).

In the N-terminal section; belongs to the pantothenate synthetase family. This sequence in the C-terminal section; belongs to the cytidylate kinase family. Type 1 subfamily.

It is found in the cytoplasm. The catalysed reaction is (R)-pantoate + beta-alanine + ATP = (R)-pantothenate + AMP + diphosphate + H(+). The enzyme catalyses CMP + ATP = CDP + ADP. It catalyses the reaction dCMP + ATP = dCDP + ADP. Its pathway is cofactor biosynthesis; (R)-pantothenate biosynthesis; (R)-pantothenate from (R)-pantoate and beta-alanine: step 1/1. Catalyzes the condensation of pantoate with beta-alanine in an ATP-dependent reaction via a pantoyl-adenylate intermediate. In terms of biological role, catalyzes the transfer of a phosphate group from ATP to either CMP or dCMP to form CDP or dCDP and ADP, respectively. This Prochlorococcus marinus (strain NATL2A) protein is Bifunctional pantoate ligase/cytidylate kinase.